A 341-amino-acid polypeptide reads, in one-letter code: Ketol-acid reductoisomerase (NADP(+)) (341 aa).

Residues 2-181 (AKVYYNGDVN…GAARAGVLET (180 aa)) enclose the KARI N-terminal Rossmann domain. Residues 25–28 (YGSQ), arginine 48, serine 52, and 82–85 (DEHQ) contribute to the NADP(+) site. The active site involves histidine 107. Glycine 133 contributes to the NADP(+) binding site. A KARI C-terminal knotted domain is found at 182–327 (TFKEETETDL…RELREMMPFV (146 aa)). Mg(2+) is bound by residues aspartate 190, glutamate 194, glutamate 226, and glutamate 230. Substrate is bound at residue serine 251.

It belongs to the ketol-acid reductoisomerase family. Mg(2+) is required as a cofactor.

The catalysed reaction is (2R)-2,3-dihydroxy-3-methylbutanoate + NADP(+) = (2S)-2-acetolactate + NADPH + H(+). It catalyses the reaction (2R,3R)-2,3-dihydroxy-3-methylpentanoate + NADP(+) = (S)-2-ethyl-2-hydroxy-3-oxobutanoate + NADPH + H(+). It participates in amino-acid biosynthesis; L-isoleucine biosynthesis; L-isoleucine from 2-oxobutanoate: step 2/4. It functions in the pathway amino-acid biosynthesis; L-valine biosynthesis; L-valine from pyruvate: step 2/4. Involved in the biosynthesis of branched-chain amino acids (BCAA). Catalyzes an alkyl-migration followed by a ketol-acid reduction of (S)-2-acetolactate (S2AL) to yield (R)-2,3-dihydroxy-isovalerate. In the isomerase reaction, S2AL is rearranged via a Mg-dependent methyl migration to produce 3-hydroxy-3-methyl-2-ketobutyrate (HMKB). In the reductase reaction, this 2-ketoacid undergoes a metal-dependent reduction by NADPH to yield (R)-2,3-dihydroxy-isovalerate. The chain is Ketol-acid reductoisomerase (NADP(+)) from Shouchella clausii (strain KSM-K16) (Alkalihalobacillus clausii).